Reading from the N-terminus, the 170-residue chain is Transcriptional repressor NrdR (170 aa).

Residues 3–34 (CPFCRHPDSRVVDSRVTDDGTAIRRRRSCPEC) fold into a zinc finger. The 91-residue stretch at 46-136 (LSVIKRSGVI…VYRGFESLED (91 aa)) folds into the ATP-cone domain. Positions 151–170 (ERSETVERGRPVPSRGVDDR) are disordered.

The protein belongs to the NrdR family. The cofactor is Zn(2+).

Its function is as follows. Negatively regulates transcription of bacterial ribonucleotide reductase nrd genes and operons by binding to NrdR-boxes. The protein is Transcriptional repressor NrdR of Acidothermus cellulolyticus (strain ATCC 43068 / DSM 8971 / 11B).